A 156-amino-acid chain; its full sequence is Small ribosomal subunit protein uS7 (156 aa).

This sequence belongs to the universal ribosomal protein uS7 family. Part of the 30S ribosomal subunit. Contacts proteins S9 and S11.

One of the primary rRNA binding proteins, it binds directly to 16S rRNA where it nucleates assembly of the head domain of the 30S subunit. Is located at the subunit interface close to the decoding center, probably blocks exit of the E-site tRNA. In Lawsonia intracellularis (strain PHE/MN1-00), this protein is Small ribosomal subunit protein uS7.